Reading from the N-terminus, the 292-residue chain is UDP-N-acetylenolpyruvoylglucosamine reductase (292 aa).

The region spanning 21–186 (QAGGLVDYLA…ISATFELQPD (166 aa)) is the FAD-binding PCMH-type domain. The active site involves Arg-165. Catalysis depends on Ser-215, which acts as the Proton donor. Glu-285 is an active-site residue.

It belongs to the MurB family. The cofactor is FAD.

Its subcellular location is the cytoplasm. It carries out the reaction UDP-N-acetyl-alpha-D-muramate + NADP(+) = UDP-N-acetyl-3-O-(1-carboxyvinyl)-alpha-D-glucosamine + NADPH + H(+). The protein operates within cell wall biogenesis; peptidoglycan biosynthesis. Cell wall formation. The chain is UDP-N-acetylenolpyruvoylglucosamine reductase from Leuconostoc mesenteroides subsp. mesenteroides (strain ATCC 8293 / DSM 20343 / BCRC 11652 / CCM 1803 / JCM 6124 / NCDO 523 / NBRC 100496 / NCIMB 8023 / NCTC 12954 / NRRL B-1118 / 37Y).